The primary structure comprises 292 residues: ATP synthase gamma chain (292 aa).

The protein belongs to the ATPase gamma chain family. In terms of assembly, F-type ATPases have 2 components, CF(1) - the catalytic core - and CF(0) - the membrane proton channel. CF(1) has five subunits: alpha(3), beta(3), gamma(1), delta(1), epsilon(1). CF(0) has three main subunits: a, b and c.

It is found in the cell inner membrane. In terms of biological role, produces ATP from ADP in the presence of a proton gradient across the membrane. The gamma chain is believed to be important in regulating ATPase activity and the flow of protons through the CF(0) complex. This is ATP synthase gamma chain from Brucella anthropi (strain ATCC 49188 / DSM 6882 / CCUG 24695 / JCM 21032 / LMG 3331 / NBRC 15819 / NCTC 12168 / Alc 37) (Ochrobactrum anthropi).